The sequence spans 117 residues: Large ribosomal subunit protein uL22 (117 aa).

The protein belongs to the universal ribosomal protein uL22 family. As to quaternary structure, part of the 50S ribosomal subunit.

Its function is as follows. This protein binds specifically to 23S rRNA; its binding is stimulated by other ribosomal proteins, e.g. L4, L17, and L20. It is important during the early stages of 50S assembly. It makes multiple contacts with different domains of the 23S rRNA in the assembled 50S subunit and ribosome. The globular domain of the protein is located near the polypeptide exit tunnel on the outside of the subunit, while an extended beta-hairpin is found that lines the wall of the exit tunnel in the center of the 70S ribosome. The protein is Large ribosomal subunit protein uL22 of Staphylococcus epidermidis (strain ATCC 35984 / DSM 28319 / BCRC 17069 / CCUG 31568 / BM 3577 / RP62A).